The chain runs to 102 residues: Aspartyl/glutamyl-tRNA(Asn/Gln) amidotransferase subunit C (102 aa).

It belongs to the GatC family. In terms of assembly, heterotrimer of A, B and C subunits.

The catalysed reaction is L-glutamyl-tRNA(Gln) + L-glutamine + ATP + H2O = L-glutaminyl-tRNA(Gln) + L-glutamate + ADP + phosphate + H(+). The enzyme catalyses L-aspartyl-tRNA(Asn) + L-glutamine + ATP + H2O = L-asparaginyl-tRNA(Asn) + L-glutamate + ADP + phosphate + 2 H(+). Functionally, allows the formation of correctly charged Asn-tRNA(Asn) or Gln-tRNA(Gln) through the transamidation of misacylated Asp-tRNA(Asn) or Glu-tRNA(Gln) in organisms which lack either or both of asparaginyl-tRNA or glutaminyl-tRNA synthetases. The reaction takes place in the presence of glutamine and ATP through an activated phospho-Asp-tRNA(Asn) or phospho-Glu-tRNA(Gln). This chain is Aspartyl/glutamyl-tRNA(Asn/Gln) amidotransferase subunit C, found in Lactobacillus acidophilus (strain ATCC 700396 / NCK56 / N2 / NCFM).